Here is a 212-residue protein sequence, read N- to C-terminus: Methylthioribulose-1-phosphate dehydratase (212 aa).

Zn(2+) contacts are provided by His97 and His99.

The protein belongs to the aldolase class II family. MtnB subfamily. As to quaternary structure, homotetramer. Zn(2+) is required as a cofactor.

The enzyme catalyses 5-(methylsulfanyl)-D-ribulose 1-phosphate = 5-methylsulfanyl-2,3-dioxopentyl phosphate + H2O. It functions in the pathway amino-acid biosynthesis; L-methionine biosynthesis via salvage pathway; L-methionine from S-methyl-5-thio-alpha-D-ribose 1-phosphate: step 2/6. In terms of biological role, catalyzes the dehydration of methylthioribulose-1-phosphate (MTRu-1-P) into 2,3-diketo-5-methylthiopentyl-1-phosphate (DK-MTP-1-P). The chain is Methylthioribulose-1-phosphate dehydratase from Bacillus cereus (strain G9842).